A 766-amino-acid polypeptide reads, in one-letter code: UPF0313 protein PP_4872 (766 aa).

The Radical SAM core domain maps to 371–649; it reads AYEMIRFSVN…KAFLRYHDPK (279 aa). Residues C385, C389, and C392 each contribute to the [4Fe-4S] cluster site. The segment at 670-766 is disordered; sequence GKHQLIPLHQ…KKPRQPVIPR (97 aa). Residues 723-735 show a composition bias toward basic and acidic residues; that stretch reads KPWDKREKAKAEA.

This sequence belongs to the UPF0313 family. [4Fe-4S] cluster serves as cofactor.

The polypeptide is UPF0313 protein PP_4872 (Pseudomonas putida (strain ATCC 47054 / DSM 6125 / CFBP 8728 / NCIMB 11950 / KT2440)).